Consider the following 495-residue polypeptide: Glycerol kinase (495 aa).

Thr11 is an ADP binding site. Residues Thr11, Thr12, and Ser13 each contribute to the ATP site. Thr11 contributes to the sn-glycerol 3-phosphate binding site. Arg15 lines the ADP pocket. Sn-glycerol 3-phosphate-binding residues include Arg81, Glu82, Tyr133, and Asp242. The glycerol site is built by Arg81, Glu82, Tyr133, Asp242, and Gln243. ADP contacts are provided by Thr264 and Gly307. Residues Thr264, Gly307, Gln311, and Gly409 each coordinate ATP. ADP is bound by residues Gly409 and Asn413.

This sequence belongs to the FGGY kinase family.

The catalysed reaction is glycerol + ATP = sn-glycerol 3-phosphate + ADP + H(+). It participates in polyol metabolism; glycerol degradation via glycerol kinase pathway; sn-glycerol 3-phosphate from glycerol: step 1/1. Its activity is regulated as follows. Inhibited by fructose 1,6-bisphosphate (FBP). Its function is as follows. Key enzyme in the regulation of glycerol uptake and metabolism. Catalyzes the phosphorylation of glycerol to yield sn-glycerol 3-phosphate. This Borrelia hermsii (strain HS1 / DAH) protein is Glycerol kinase.